Reading from the N-terminus, the 153-residue chain is Arginine repressor (153 aa).

The protein belongs to the ArgR family.

It localises to the cytoplasm. The protein operates within amino-acid biosynthesis; L-arginine biosynthesis [regulation]. In terms of biological role, regulates arginine biosynthesis genes. The sequence is that of Arginine repressor from Actinobacillus pleuropneumoniae serotype 3 (strain JL03).